A 152-amino-acid chain; its full sequence is Mitochondrial holo-[acyl-carrier-protein] synthase (152 aa).

Belongs to the P-Pant transferase superfamily. AcpS family.

It is found in the mitochondrion. It catalyses the reaction apo-[ACP] + CoA = holo-[ACP] + adenosine 3',5'-bisphosphate + H(+). Its function is as follows. Transfers the 4'-phosphopantetheine moiety from coenzyme A to a Ser of mitochondrial acyl-carrier-protein. In Candida glabrata (strain ATCC 2001 / BCRC 20586 / JCM 3761 / NBRC 0622 / NRRL Y-65 / CBS 138) (Yeast), this protein is Mitochondrial holo-[acyl-carrier-protein] synthase (PPT2).